Reading from the N-terminus, the 350-residue chain is Neurogenic differentiation factor 1 (350 aa).

The interval 1-91 (MTKSYSEESM…KKKKMTKARM (91 aa)) is disordered. The segment covering 7 to 18 (EESMMLESQSSS) has biased composition (low complexity). Over residues 22–38 (DKCHSSSQDERDVDKTS) the composition is skewed to basic and acidic residues. Acidic residues predominate over residues 44–72 (DMEDDDDAGLNRLEDEDDEEEEEEEEDGD). The segment covering 76-91 (PKRRGPKKKKMTKARM) has biased composition (basic residues). Positions 82 to 88 (KKKKMTK) match the Nuclear localization signal motif. Residues 96–148 (MRRMKANARERNRMHGLNDALESLRKVVPCYSKTQKLSKIETLRLAKNYIWAL) enclose the bHLH domain.

Efficient DNA binding requires dimerization with another bHLH protein. In the embryo, expressed broadly in a subset of primary neurons in the brain and spinal cord. At 28 hours post-fertilization (hpf), regions of expression include telencephalon, olfactory placode, epiphysis, cranial ganglia, acoustic ganglia, Rohon-Beard mechano-sensory neurons and motoneurons. In 2 day postembryonic brain, expressed in many brain regions but absent from subpallium, the ventral preoptic region, ventral thalamus and hypothalamus; sites of expression extend laterally from the ventricular proliferative regions and correspond to freshly determined cell populations. In adult, expressed in all tissues examined with highest levels in brain.

It is found in the cytoplasm. The protein localises to the nucleus. Its function is as follows. May act as a transcriptional activator. Differentiation factor required for neurogenesis. Acts as an upstream activator of isl1. The chain is Neurogenic differentiation factor 1 from Danio rerio (Zebrafish).